Consider the following 453-residue polypeptide: Probable exopolygalacturonase B (453 aa).

A signal peptide spans 1–16; the sequence is MKFFALAALFASTVNS. Residues Asn-185 and Asn-225 are each glycosylated (N-linked (GlcNAc...) asparagine). Residue Asp-255 is the Proton donor of the active site. Cys-257 and Cys-274 are oxidised to a cystine. N-linked (GlcNAc...) asparagine glycans are attached at residues Asn-263 and Asn-275. Residue His-278 is part of the active site. PbH1 repeat units lie at residues 295 to 316 and 327 to 348; these read IENVWIENVTLLNGENGARLKA and INNVTYKNIHVENTDNPIVLDQ. N-linked (GlcNAc...) asparagine glycans are attached at residues Asn-302, Asn-329, Asn-354, and Asn-366. The PbH1 3 repeat unit spans residues 362–405; sequence PSRVNFTNIVFEDIYGTSSGKRGKVVADLTCSPNAVCSGIRLKN. The cysteines at positions 392 and 398 are disulfide-linked. N-linked (GlcNAc...) asparagine glycosylation occurs at Asn-436.

The protein belongs to the glycosyl hydrolase 28 family.

It localises to the secreted. It catalyses the reaction [(1-&gt;4)-alpha-D-galacturonosyl](n) + H2O = alpha-D-galacturonate + [(1-&gt;4)-alpha-D-galacturonosyl](n-1). Its function is as follows. Specific in hydrolyzing the terminal glycosidic bond of polygalacturonic acid and oligogalacturonates. In Aspergillus fumigatus (strain CBS 144.89 / FGSC A1163 / CEA10) (Neosartorya fumigata), this protein is Probable exopolygalacturonase B (pgxB).